Consider the following 290-residue polypeptide: Chitinase 10 (290 aa).

An N-terminal signal peptide occupies residues 1-28 (MAKPTPAPRATPFLLAAVLSIVVVAASG). Cystine bridges form between Cys70–Cys132 and Cys144–Cys153. The Proton donor role is filled by Glu114. Asn193 and Asn234 each carry an N-linked (GlcNAc...) asparagine glycan. Cys252 and Cys284 are disulfide-bonded.

The protein belongs to the glycosyl hydrolase 19 family. Chitinase class I subfamily. As to expression, expressed at low levels in roots, leaves and meristems.

The enzyme catalyses Random endo-hydrolysis of N-acetyl-beta-D-glucosaminide (1-&gt;4)-beta-linkages in chitin and chitodextrins.. In Oryza sativa subsp. japonica (Rice), this protein is Chitinase 10 (Cht10).